Reading from the N-terminus, the 177-residue chain is Ribosome maturation factor RimP (177 aa).

Belongs to the RimP family.

The protein resides in the cytoplasm. Its function is as follows. Required for maturation of 30S ribosomal subunits. The protein is Ribosome maturation factor RimP of Mycobacterium marinum (strain ATCC BAA-535 / M).